Consider the following 72-residue polypeptide: Small, acid-soluble spore protein C (72 aa).

The protein belongs to the alpha/beta-type SASP family.

In terms of biological role, SASP are bound to spore DNA. They are double-stranded DNA-binding proteins that cause DNA to change to an a-like conformation. They protect the DNA backbone from chemical and enzymatic cleavage and are thus involved in dormant spore's high resistance to UV light. The protein is Small, acid-soluble spore protein C (sspC) of Bacillus subtilis (strain 168).